The chain runs to 163 residues: Nucleotide-binding protein HS_0688 (163 aa).

The protein belongs to the YajQ family.

In terms of biological role, nucleotide-binding protein. The protein is Nucleotide-binding protein HS_0688 of Histophilus somni (strain 129Pt) (Haemophilus somnus).